Here is a 499-residue protein sequence, read N- to C-terminus: UDP-N-acetylmuramoylalanine--D-glutamate ligase (499 aa).

An ATP-binding site is contributed by 128-134; that stretch reads GTNGKTT.

This sequence belongs to the MurCDEF family.

Its subcellular location is the cytoplasm. It catalyses the reaction UDP-N-acetyl-alpha-D-muramoyl-L-alanine + D-glutamate + ATP = UDP-N-acetyl-alpha-D-muramoyl-L-alanyl-D-glutamate + ADP + phosphate + H(+). Its pathway is cell wall biogenesis; peptidoglycan biosynthesis. In terms of biological role, cell wall formation. Catalyzes the addition of glutamate to the nucleotide precursor UDP-N-acetylmuramoyl-L-alanine (UMA). The sequence is that of UDP-N-acetylmuramoylalanine--D-glutamate ligase from Rhodococcus jostii (strain RHA1).